The sequence spans 330 residues: Ribosomal RNA small subunit methyltransferase H (330 aa).

S-adenosyl-L-methionine contacts are provided by residues 48–50, Asp67, Leu101, Asp115, and Gln122; that span reads GGH.

It belongs to the methyltransferase superfamily. RsmH family.

The protein resides in the cytoplasm. The enzyme catalyses cytidine(1402) in 16S rRNA + S-adenosyl-L-methionine = N(4)-methylcytidine(1402) in 16S rRNA + S-adenosyl-L-homocysteine + H(+). Specifically methylates the N4 position of cytidine in position 1402 (C1402) of 16S rRNA. The sequence is that of Ribosomal RNA small subunit methyltransferase H from Pseudarthrobacter chlorophenolicus (strain ATCC 700700 / DSM 12829 / CIP 107037 / JCM 12360 / KCTC 9906 / NCIMB 13794 / A6) (Arthrobacter chlorophenolicus).